We begin with the raw amino-acid sequence, 338 residues long: Heat-inducible transcription repressor HrcA (338 aa).

It belongs to the HrcA family.

Functionally, negative regulator of class I heat shock genes (grpE-dnaK-dnaJ and groELS operons). Prevents heat-shock induction of these operons. The sequence is that of Heat-inducible transcription repressor HrcA from Bacillus cereus (strain B4264).